Consider the following 347-residue polypeptide: NADH-ubiquinone oxidoreductase chain 2 (347 aa).

The next 11 helical transmembrane spans lie at M1–M21, H25–M45, Y59–M79, T96–P116, L123–Y143, I153–T173, I178–P198, L200–I220, I239–G259, I278–Y298, and F325–I345.

Belongs to the complex I subunit 2 family. Core subunit of respiratory chain NADH dehydrogenase (Complex I) which is composed of 45 different subunits. Interacts with TMEM242.

Its subcellular location is the mitochondrion inner membrane. The catalysed reaction is a ubiquinone + NADH + 5 H(+)(in) = a ubiquinol + NAD(+) + 4 H(+)(out). In terms of biological role, core subunit of the mitochondrial membrane respiratory chain NADH dehydrogenase (Complex I) that is believed to belong to the minimal assembly required for catalysis. Complex I functions in the transfer of electrons from NADH to the respiratory chain. The immediate electron acceptor for the enzyme is believed to be ubiquinone. This chain is NADH-ubiquinone oxidoreductase chain 2, found in Oryzorictes hova (Hova rice tenrec).